Reading from the N-terminus, the 134-residue chain is Retinoid-binding protein 7 (134 aa).

The protein belongs to the calycin superfamily. Fatty-acid binding protein (FABP) family. In terms of tissue distribution, expressed primarily in kidney, heart and transverse colon. Detected in adult lymph node, appendix, ascending colon, and in fetal heart and spleen.

The protein resides in the cytoplasm. Functionally, intracellular transport of retinol. The chain is Retinoid-binding protein 7 (RBP7) from Homo sapiens (Human).